Here is a 171-residue protein sequence, read N- to C-terminus: Putative rhomboid protein L523 (171 aa).

Transmembrane regions (helical) follow at residues 3 to 23 (YVTY…LNFF), 67 to 87 (FAFC…AEHT), 94 to 114 (VYTV…LMSL), and 119 to 139 (GLSI…SGIS). The active-site Nucleophile is S100. H143 is a catalytic residue. The chain crosses the membrane as a helical span at residues 144-164 (ICGMIAGFVYVVLFPLPKGSV).

This sequence belongs to the peptidase S54 family.

The protein localises to the membrane. In terms of biological role, probable serine protease. This is Putative rhomboid protein L523 from Acanthamoeba polyphaga mimivirus (APMV).